The primary structure comprises 273 residues: Shikimate dehydrogenase (NADP(+)) (273 aa).

Residues 15-17 (SQS) and T62 contribute to the shikimate site. K66 (proton acceptor) is an active-site residue. NADP(+) is bound at residue E78. The shikimate site is built by N87 and D102. NADP(+)-binding positions include 127 to 131 (GAGGA), 151 to 156 (NRTVTK), and M215. Shikimate is bound at residue Y217. G239 is a binding site for NADP(+).

This sequence belongs to the shikimate dehydrogenase family. As to quaternary structure, homodimer.

The catalysed reaction is shikimate + NADP(+) = 3-dehydroshikimate + NADPH + H(+). The protein operates within metabolic intermediate biosynthesis; chorismate biosynthesis; chorismate from D-erythrose 4-phosphate and phosphoenolpyruvate: step 4/7. Functionally, involved in the biosynthesis of the chorismate, which leads to the biosynthesis of aromatic amino acids. Catalyzes the reversible NADPH linked reduction of 3-dehydroshikimate (DHSA) to yield shikimate (SA). This Laribacter hongkongensis (strain HLHK9) protein is Shikimate dehydrogenase (NADP(+)).